A 741-amino-acid chain; its full sequence is Zinc finger and BTB domain-containing protein 20 (741 aa).

Over residues 1 to 17 (MLERKKPKTAENQKASE) the composition is skewed to basic and acidic residues. The segment at 1 to 28 (MLERKKPKTAENQKASEENEITQPGGSS) is disordered. The BTB domain maps to 104–167 (CDVTVRIHGS…MYSGVLRVSQ (64 aa)). The segment at 203 to 235 (GIQDSGQDTPRGTPESGTSGQSSDTESGYLQSH) is disordered. The segment covering 206 to 235 (DSGQDTPRGTPESGTSGQSSDTESGYLQSH) has biased composition (polar residues). A Phosphothreonine modification is found at threonine 211. Residue lysine 330 forms a Glycyl lysine isopeptide (Lys-Gly) (interchain with G-Cter in SUMO1); alternate linkage. Lysine 330 is covalently cross-linked (Glycyl lysine isopeptide (Lys-Gly) (interchain with G-Cter in SUMO2); alternate). Residues 350–440 (RNESEECTED…SSPERSNESE (91 aa)) form a disordered region. Serine 353 is subject to Phosphoserine. Acidic residues predominate over residues 354-367 (EECTEDTDQAEGTE). Position 357 is a phosphothreonine (threonine 357). A Glycyl lysine isopeptide (Lys-Gly) (interchain with G-Cter in SUMO2) cross-link involves residue lysine 371. Low complexity predominate over residues 404–423 (AEPAQPEQAAEAPAESSAQP). C2H2-type zinc fingers lie at residues 578 to 600 (YECTLCNKTFTAKQNYVKHMFVH), 606 to 628 (HQCSICWRSFSLKDYLIKHMVTH), 634 to 656 (YQCSICNKRFTQKSSLNVHMRLH), and 662 to 684 (YECYICKKKFSHKTLLERHVALH). Phosphothreonine is present on residues threonine 690 and threonine 695. The C2H2-type 5 zinc finger occupies 715–737 (YVCSVCPAKFDQIEQFNDHMRMH). Lysine 723 is covalently cross-linked (Glycyl lysine isopeptide (Lys-Gly) (interchain with G-Cter in SUMO2)).

In terms of assembly, can homodimerize. Binds to DNA. Sumoylated with SUMO1. As to expression, specifically expressed in early hippocampal neurons, cerebellar granule cells and gliogenic progenitors as well as in differentiated glia. Expressed in adult and aged myogenic satellite cells.

It localises to the nucleus. Functionally, may be a transcription factor that may be involved in hematopoiesis, oncogenesis, and immune responses. Plays a role in postnatal myogenesis, may be involved in the regulation of satellite cells self-renewal. The protein is Zinc finger and BTB domain-containing protein 20 (Zbtb20) of Mus musculus (Mouse).